The chain runs to 121 residues: Ribosome-binding factor A (121 aa).

The protein belongs to the RbfA family. As to quaternary structure, monomer. Binds 30S ribosomal subunits, but not 50S ribosomal subunits or 70S ribosomes.

The protein localises to the cytoplasm. In terms of biological role, one of several proteins that assist in the late maturation steps of the functional core of the 30S ribosomal subunit. Associates with free 30S ribosomal subunits (but not with 30S subunits that are part of 70S ribosomes or polysomes). Required for efficient processing of 16S rRNA. May interact with the 5'-terminal helix region of 16S rRNA. In Paraburkholderia phytofirmans (strain DSM 17436 / LMG 22146 / PsJN) (Burkholderia phytofirmans), this protein is Ribosome-binding factor A.